The sequence spans 802 residues: Ribosome-releasing factor 2, mitochondrial (802 aa).

Residues 13–297 (KKIRNIGIIA…AVVDFLPSPA (285 aa)) enclose the tr-type G domain. GTP is bound by residues 22-29 (AHIDAGKT), 86-90 (DTPGH), and 140-143 (NKMD).

It belongs to the TRAFAC class translation factor GTPase superfamily. Classic translation factor GTPase family. EF-G/EF-2 subfamily.

It localises to the mitochondrion. Mitochondrial GTPase that mediates the disassembly of ribosomes from messenger RNA at the termination of mitochondrial protein biosynthesis. Not involved in the GTP-dependent ribosomal translocation step during translation elongation. This chain is Ribosome-releasing factor 2, mitochondrial, found in Yarrowia lipolytica (strain CLIB 122 / E 150) (Yeast).